The sequence spans 735 residues: Ion-translocating oxidoreductase complex subunit C (735 aa).

4Fe-4S ferredoxin-type domains are found at residues 368–397 (MGAPQEEKSCIRCSACADACPADLLPQQLY) and 407–436 (KATAHHIADCIECGACAWVCPSNIPLVQYF). Residues cysteine 377, cysteine 380, cysteine 383, cysteine 387, cysteine 416, cysteine 419, cysteine 422, and cysteine 426 each contribute to the [4Fe-4S] cluster site. The segment at 538 to 715 (KQAAHPMADS…PADPRKAAVA (178 aa)) is disordered. Low complexity predominate over residues 556-565 (KAAVEAAIAR).

The protein belongs to the 4Fe4S bacterial-type ferredoxin family. RnfC subfamily. The complex is composed of six subunits: RsxA, RsxB, RsxC, RsxD, RsxE and RsxG. It depends on [4Fe-4S] cluster as a cofactor.

The protein localises to the cell inner membrane. Functionally, part of a membrane-bound complex that couples electron transfer with translocation of ions across the membrane. Required to maintain the reduced state of SoxR. This is Ion-translocating oxidoreductase complex subunit C from Salmonella typhimurium (strain LT2 / SGSC1412 / ATCC 700720).